The primary structure comprises 486 residues: uncharacterized protein (486 aa).

This is an uncharacterized protein from Methanocaldococcus jannaschii (strain ATCC 43067 / DSM 2661 / JAL-1 / JCM 10045 / NBRC 100440) (Methanococcus jannaschii).